We begin with the raw amino-acid sequence, 488 residues long: H2.0-like homeobox protein (488 aa).

2 disordered regions span residues 118–173 (AYHH…SSKD) and 331–488 (WRHS…LGCL). Composition is skewed to low complexity over residues 125-135 (QQQQQQQQPQQ) and 158-171 (PNPH…APSS). The homeobox DNA-binding region spans 276–335 (RSWSRAVFSNLQRKGLEKRFEIQKYVTKPDRKQLAAMLGLTDAQVKVWFQNRRMKWRHSK). Composition is skewed to basic and acidic residues over residues 334-349 (SKEA…EAGE) and 363-372 (DERSPSRSEG). The segment covering 373–383 (EAESESSDSES) has biased composition (acidic residues). Residues 390 to 401 (DTERTEGSERSL) show a composition bias toward basic and acidic residues. A compositionally biased stretch (gly residues) spans 422 to 432 (GSGGSSGGGGN). Low complexity predominate over residues 433–454 (SFSFSSASSLSSSSTSAGCASS).

The protein belongs to the H2.0 homeobox family. As to expression, low level in normal B and T-cells, high level in activated lymphocytes and monocytes. Also found in thymus, tonsil, bone marrow, developing vessels, and fetal brain.

Its subcellular location is the nucleus. Its function is as follows. Transcription factor required for TBX21/T-bet-dependent maturation of Th1 cells as well as maintenance of Th1-specific gene expression. Involved in embryogenesis and hematopoiesis. In Homo sapiens (Human), this protein is H2.0-like homeobox protein (HLX).